The chain runs to 299 residues: Mitochondrial magnesium exporter 1 (299 aa).

Solcar repeat units lie at residues 12 to 103 (SNPV…GKRL), 112 to 200 (LTYP…LQEL), and 210 to 296 (ISTT…TNDL). 4 consecutive transmembrane segments (helical) span residues 79 to 99 (ISAPLVGVTPIYAVDFAVYAA), 114 to 134 (YPQIFAAGALAGVCSALVTVP), 216 to 236 (ILSGGTAGIVFWTLAVPFDVL), and 272 to 292 (ILPILLRAFPSTAAVFFGVEL).

Belongs to the mitochondrial carrier (TC 2.A.29) family.

The protein localises to the mitochondrion membrane. In terms of biological role, mediates efflux of magnesium ions from mitochondria, suggesting a role in magnesium homeostasis. The polypeptide is Mitochondrial magnesium exporter 1 (Drosophila melanogaster (Fruit fly)).